The sequence spans 1208 residues: DNA-directed RNA polymerase subunit beta (1208 aa).

It belongs to the RNA polymerase beta chain family. As to quaternary structure, the RNAP catalytic core consists of 2 alpha, 1 beta, 1 beta' and 1 omega subunit. When a sigma factor is associated with the core the holoenzyme is formed, which can initiate transcription.

The catalysed reaction is RNA(n) + a ribonucleoside 5'-triphosphate = RNA(n+1) + diphosphate. DNA-dependent RNA polymerase catalyzes the transcription of DNA into RNA using the four ribonucleoside triphosphates as substrates. In Enterococcus faecium (Streptococcus faecium), this protein is DNA-directed RNA polymerase subunit beta.